The following is a 382-amino-acid chain: S-adenosylmethionine synthase (382 aa).

His16 provides a ligand contact to ATP. Asp18 lines the Mg(2+) pocket. Glu44 is a K(+) binding site. Residues Glu57 and Gln100 each contribute to the L-methionine site. The segment at 100–110 (QSADIAMGVDE) is flexible loop. ATP contacts are provided by residues 165–167 (DAK), Asp240, 246–247 (RK), Ala263, and Lys267. Asp240 serves as a coordination point for L-methionine. Lys271 serves as a coordination point for L-methionine.

The protein belongs to the AdoMet synthase family. In terms of assembly, homotetramer; dimer of dimers. The cofactor is Mg(2+). It depends on K(+) as a cofactor.

The protein localises to the cytoplasm. The enzyme catalyses L-methionine + ATP + H2O = S-adenosyl-L-methionine + phosphate + diphosphate. It functions in the pathway amino-acid biosynthesis; S-adenosyl-L-methionine biosynthesis; S-adenosyl-L-methionine from L-methionine: step 1/1. Catalyzes the formation of S-adenosylmethionine (AdoMet) from methionine and ATP. The overall synthetic reaction is composed of two sequential steps, AdoMet formation and the subsequent tripolyphosphate hydrolysis which occurs prior to release of AdoMet from the enzyme. This chain is S-adenosylmethionine synthase, found in Saccharophagus degradans (strain 2-40 / ATCC 43961 / DSM 17024).